Here is a 659-residue protein sequence, read N- to C-terminus: Exoribonuclease 2 (659 aa).

Residues 189–531 (RKDLTALHFV…NHRLIKACIA (343 aa)) enclose the RNB domain. In terms of domain architecture, S1 motif spans 576–658 (KPEFQAEVQD…ETRSLIGNLV (83 aa)).

The protein belongs to the RNR ribonuclease family. RNase II subfamily.

The protein resides in the cytoplasm. The catalysed reaction is Exonucleolytic cleavage in the 3'- to 5'-direction to yield nucleoside 5'-phosphates.. Functionally, involved in mRNA degradation. Hydrolyzes single-stranded polyribonucleotides processively in the 3' to 5' direction. This chain is Exoribonuclease 2, found in Actinobacillus succinogenes (strain ATCC 55618 / DSM 22257 / CCUG 43843 / 130Z).